The chain runs to 191 residues: Phosphoheptose isomerase (191 aa).

The SIS domain occupies 37-191 (ITSSLKQGGK…LILLIEQSLL (155 aa)). Residue 52–54 (NGG) participates in substrate binding. The Zn(2+) site is built by H61 and E65. Substrate is bound by residues E65, 93–94 (ND), 119–121 (STS), S124, and Q172. Zn(2+)-binding residues include Q172 and H180.

This sequence belongs to the SIS family. GmhA subfamily. Zn(2+) serves as cofactor.

Its subcellular location is the cytoplasm. The enzyme catalyses 2 D-sedoheptulose 7-phosphate = D-glycero-alpha-D-manno-heptose 7-phosphate + D-glycero-beta-D-manno-heptose 7-phosphate. It functions in the pathway carbohydrate biosynthesis; D-glycero-D-manno-heptose 7-phosphate biosynthesis; D-glycero-alpha-D-manno-heptose 7-phosphate and D-glycero-beta-D-manno-heptose 7-phosphate from sedoheptulose 7-phosphate: step 1/1. Functionally, catalyzes the isomerization of sedoheptulose 7-phosphate in D-glycero-D-manno-heptose 7-phosphate. This is Phosphoheptose isomerase from Cytophaga hutchinsonii (strain ATCC 33406 / DSM 1761 / CIP 103989 / NBRC 15051 / NCIMB 9469 / D465).